A 530-amino-acid polypeptide reads, in one-letter code: Structure-specific endonuclease subunit SLX1 homolog 2 (530 aa).

A GIY-YIG domain is found at 4–89 (RFHCVYLLTS…PTKSTRLKTQ (86 aa)). Residues 232–365 (CALCSLPLRS…PSQPCPCPLC (134 aa)) form an SLX1-type zinc finger. Disordered stretches follow at residues 276 to 306 (ATMG…MDAH), 410 to 438 (NSSL…YCGD), and 474 to 502 (LPPS…RMTD). Positions 283-298 (RNERSGEYSNKIKDDS) are enriched in basic and acidic residues.

Belongs to the SLX1 family. As to quaternary structure, forms a heterodimer with a member of the SLX4 family. Requires a divalent metal cation as cofactor.

It localises to the nucleus. In terms of biological role, catalytic subunit of a heterodimeric structure-specific endonuclease that resolves DNA secondary structures generated during DNA repair and recombination. Has endonuclease activity towards branched DNA substrates, introducing single-strand cuts in duplex DNA close to junctions with ss-DNA. The polypeptide is Structure-specific endonuclease subunit SLX1 homolog 2 (Trypanosoma cruzi (strain CL Brener)).